Reading from the N-terminus, the 609-residue chain is Wee1-like protein kinase (609 aa).

A compositionally biased stretch (basic and acidic residues) spans 1 to 10; sequence MAFRQSEHEM. Disordered stretches follow at residues 1–88 and 147–166; these read MAFR…SMSP and PLHN…PFTP. 3 positions are modified to phosphoserine: S23, S25, and S27. Basic and acidic residues predominate over residues 37 to 48; that stretch reads RFADDDFDKDTP. T47 bears the Phosphothreonine mark. Phosphoserine is present on S52. Residues 153-165 show a composition bias toward polar residues; that stretch reads LPTQDTANVNPFT. T165 carries the phosphothreonine modification. S168 carries the phosphoserine modification. The 279-residue stretch at 239-517 folds into the Protein kinase domain; the sequence is FMQVNVIGVG…SQSIFSHPIL (279 aa). ATP-binding positions include 245 to 253 and K268; that span reads IGVGEFGVV. Residue D361 is the Proton acceptor of the active site. N366 and D412 together coordinate Mg(2+).

This sequence belongs to the protein kinase superfamily. Ser/Thr protein kinase family. WEE1 subfamily. The cofactor is Mg(2+). Post-translationally, phosphorylated during M and G1 phases. In terms of tissue distribution, expressed in embryos; expression remains high in the proliferating cells of the central nervous system well after cells in the rest of the embryo have ceased dividing.

Its subcellular location is the nucleus. It carries out the reaction L-tyrosyl-[protein] + ATP = O-phospho-L-tyrosyl-[protein] + ADP + H(+). Its activity is regulated as follows. Negatively regulated by phosphorylation in the M-phase. Its function is as follows. Acts as a negative regulator of entry into mitosis (G2 to M transition). This kinase specifically phosphorylates and inactivates cyclin B1-complexed CDC2. In Drosophila melanogaster (Fruit fly), this protein is Wee1-like protein kinase.